The chain runs to 23 residues: Conotoxin as25a (23 aa).

A 4-hydroxyproline; partial modification is found at Pro4. At Pro23 the chain carries 4-hydroxyproline; partial; alternate. Pro23 bears the Proline amide; alternate mark.

Post-translationally, the name as25b given in PubMed:23474143 corresponds to the hydroxylated peptide. The amidation of the C-terminus of this hydroxylated peptide is not directly confirmed. In terms of processing, contains 3 disulfide bonds. Expressed by the venom duct.

The protein resides in the secreted. Its function is as follows. Upon intracranial injection in mice, as25a (the toxin without the two 4-hydroxyprolines) provokes paralysis of the hind limbs and death with a dose of 240 pmol. The polypeptide is Conotoxin as25a (Conus cancellatus (Cancellate cone)).